The primary structure comprises 240 residues: Nuclear receptor-interacting protein 3 (240 aa).

This chain is Nuclear receptor-interacting protein 3 (Nrip3), found in Mus musculus (Mouse).